The sequence spans 219 residues: Neurotrophic factor BDNF precursor form (219 aa).

The signal sequence occupies residues 1–5 (SCMKA). Positions 6 to 114 (APMKEVSIRG…AANMSMRVRR (109 aa)) are excised as a propeptide. A glycan (N-linked (GlcNAc...) asparagine) is linked at Asn107. Cysteines 127 and 194 form a disulfide.

This sequence belongs to the NGF-beta family.

It localises to the secreted. Promotes the survival of neuronal populations that are all located either in the central nervous system or directly connected to it. This Loxocemus bicolor (Mexican burrowing python) protein is Neurotrophic factor BDNF precursor form (BDNF).